A 129-amino-acid chain; its full sequence is MSIPADLKYTQSHEWVRAEADGSVTVGITHHAQDLLGDMVFIENPAVGRTLAKGEECAVVESVKAASDVYAPVAGEVIAANGEVESSPESVNQDAYTAWLFKIKPANPADVDALLDAAAYQKVVESEAH.

Positions 23–104 (SVTVGITHHA…AYTAWLFKIK (82 aa)) constitute a Lipoyl-binding domain. Residue K64 is modified to N6-lipoyllysine.

The protein belongs to the GcvH family. In terms of assembly, the glycine cleavage system is composed of four proteins: P, T, L and H. It depends on (R)-lipoate as a cofactor.

Its function is as follows. The glycine cleavage system catalyzes the degradation of glycine. The H protein shuttles the methylamine group of glycine from the P protein to the T protein. The sequence is that of Glycine cleavage system H protein from Thiobacillus denitrificans (strain ATCC 25259 / T1).